Reading from the N-terminus, the 317-residue chain is Dehydrogenase/reductase SDR family protein 7-like (317 aa).

Residues 1 to 10 (MKNLAERSAG) are Cytoplasmic-facing. The helical; Signal-anchor for type II membrane protein transmembrane segment at 11-31 (SLYWWLLATLFLPIAIPGLVL) threads the bilayer. Over 32–317 (KLLTMMKEQR…KKRAEKLNST (286 aa)) the chain is Peroxisomal. 52–76 (LITGASSGLGEALAHSFFLAGCKVV) serves as a coordination point for NAD(+). Serine 189 serves as a coordination point for substrate. Tyrosine 202 serves as the catalytic Proton acceptor.

This sequence belongs to the short-chain dehydrogenases/reductases (SDR) family.

Its subcellular location is the peroxisome membrane. Functionally, putative oxidoreductase. The polypeptide is Dehydrogenase/reductase SDR family protein 7-like (Anopheles gambiae (African malaria mosquito)).